The primary structure comprises 219 residues: MTNNQFSEDTKKIADQIKDSLIGISDNLVLESKEVEEIFEELSKNEEFDYEIERILAILNEQTMDLTQLQSRIILLIRKYLDKTKNLKLKMDEKLINKNVAEVSNYLMHQHSKIVRDANKNLAKPKDKLQSLTKQARMDLKRLIKSFAVYQVYMFMNPKRIAGETKLMNFAYNMIKGGMKLAKKYEGGKEKDIKSYSPRLIKKLEKAHAGFKKNNSISI.

This is an uncharacterized protein from Rickettsia prowazekii (strain Madrid E).